The primary structure comprises 607 residues: BTB/POZ domain-containing protein DOT3 (607 aa).

The 70-residue stretch at 52–121 (TDLSIQVNDI…CYNLPLDLNP (70 aa)) folds into the BTB domain. The region spanning 211 to 487 (RCLYNDIATL…VQINTQVLFS (277 aa)) is the NPH3 domain. Position 428 is a phosphotyrosine (Tyr-428). Disordered stretches follow at residues 498-520 (DKLP…SRDN) and 573-607 (KSFQ…MSMS). 2 stretches are compositionally biased toward basic and acidic residues: residues 499–520 (KLPE…SRDN) and 577–586 (TKREDEETRE). Positions 511-563 (REDKRMSRDNEIIKTLKEELENVKKKMSELQSDYNELQQEYERLSSKQKSSHN) form a coiled coil.

The protein belongs to the NPH3 family. In terms of tissue distribution, expressed in emerging leaf primordia.

It participates in protein modification; protein ubiquitination. Functionally, may act as a substrate-specific adapter of an E3 ubiquitin-protein ligase complex (CUL3-RBX1-BTB) which mediates the ubiquitination and subsequent proteasomal degradation of target proteins. Involved in leaf vasculature patterning. The polypeptide is BTB/POZ domain-containing protein DOT3 (Arabidopsis thaliana (Mouse-ear cress)).